The chain runs to 1185 residues: Syntaxin-binding protein 5-like (1185 aa).

Met1 carries the post-translational modification N-acetylmethionine. The disordered stretch occupies residues 15–44; sequence ASSPGSGSSSGSNSGGAGSGSVHPGGTAGL. Positions 16–26 are enriched in low complexity; that stretch reads SSPGSGSSSGS. 10 WD repeats span residues 73–106, 113–152, 157–193, 212–246, 252–284, 306–348, 356–390, 412–489, 517–628, and 642–704; these read TALA…CYCQ, VLQL…SLKF, ITYC…GYVI, HLSD…ELRV, IHSI…PSRP, PILK…KAIT, IVEF…VVDL, TCTA…YKLK, QMIY…DLVI, and TSLS…IADN. Phosphothreonine is present on Thr567. Residues 567-601 form a disordered region; it reads TPEPETSPPFPDLSSQLPPSRSLSGSTNTVSSEGV. Phosphoserine is present on residues Ser573, Ser588, and Ser592. Over residues 578 to 592 the composition is skewed to low complexity; that stretch reads DLSSQLPPSRSLSGS. Position 595 is a phosphothreonine (Thr595). The residue at position 598 (Ser598) is a Phosphoserine. Arg708 is subject to Omega-N-methylarginine. Residues 747-768 are compositionally biased toward polar residues; that stretch reads TSDHVNGHCTSPTSQSCSSGKR. A disordered region spans residues 747–770; sequence TSDHVNGHCTSPTSQSCSSGKRLS. A phosphoserine mark is found at Ser762, Ser764, Ser765, Ser770, Ser771, Ser792, Ser799, Ser811, Ser819, Ser821, and Ser822. 4 WD repeats span residues 831–888, 897–968, 973–1017, and 1031–1054; these read ITAL…SGTF, TFSC…QTCL, ITET…LDVN, and CFTN…TYSQ. Thr1092 bears the Phosphothreonine mark. Positions 1120 to 1180 constitute a v-SNARE coiled-coil homology domain; that stretch reads SIEGMKGAAG…HELMLKYKDK (61 aa).

It belongs to the WD repeat L(2)GL family. In terms of assembly, interacts with STX1A and STX4. Post-translationally, phosphorylated, leading to STXBP5L increased turnover and subsequent de-repression of insulin secretion. Phosphorylated on serine residues in response to glucose or phorbol esters. In terms of processing, ubiquitinated by the E3 ligase SYVN1, leading to STXBP5L proteasomal degradation. In terms of tissue distribution, detected in hippocampus and cerebellum. Expressed in pancreatic beta-cells where it modulates insulin secretion.

Its subcellular location is the cytoplasm. The protein localises to the cell membrane. It is found in the membrane. Functionally, plays a role in vesicle trafficking and exocytosis inhibition. In pancreatic beta-cells, inhibits insulin secretion probably by interacting with and regulating STX1A and STX4, key t-SNARE proteins involved in the fusion of insulin granules to the plasma membrane. Also plays a role in neurotransmitter release by inhibiting basal acetylcholine release from axon terminals and by preventing synaptic fatigue upon repetitive stimulation. Promotes as well axonal outgrowth. The polypeptide is Syntaxin-binding protein 5-like (Stxbp5l) (Mus musculus (Mouse)).